We begin with the raw amino-acid sequence, 88 residues long: Small ribosomal subunit protein bS18 (88 aa).

The disordered stretch occupies residues 1 to 26 (MAFAQSGGAGGGGGQRRPFFRRRKTC).

Belongs to the bacterial ribosomal protein bS18 family. In terms of assembly, part of the 30S ribosomal subunit. Forms a tight heterodimer with protein bS6.

In terms of biological role, binds as a heterodimer with protein bS6 to the central domain of the 16S rRNA, where it helps stabilize the platform of the 30S subunit. The protein is Small ribosomal subunit protein bS18 of Xanthobacter autotrophicus (strain ATCC BAA-1158 / Py2).